Consider the following 662-residue polypeptide: Mitochondrial Rho GTPase 1 (662 aa).

Residues 1-634 (MTKETIRVVI…AKDVDYRQTA (634 aa)) lie on the Cytoplasmic side of the membrane. In terms of domain architecture, Miro 1 spans 3 to 185 (KETIRVVICG…FYLCQRAITH (183 aa)). GTP is bound by residues 12 to 19 (GDEGVGKS), 62 to 64 (DTS), and 116 to 119 (NKCD). 2 consecutive EF-hand domains span residues 201 to 236 (LAVM…CFNK) and 330 to 365 (KGYR…TPGL). Positions 214, 216, 218, 220, 225, 343, 345, 347, and 354 each coordinate Ca(2+). The Miro 2 domain occupies 446-611 (RKVFNCFVIG…FIKITEAALD (166 aa)). Residues 455-462 (GKPCCGKS), 491-495 (ELKGG), and 560-563 (SKAD) each bind GTP. A helical; Anchor for type IV membrane protein membrane pass occupies residues 635–655 (LIFGSTVGFVALCSFTLMKLF). Residues 656–662 (KSSKFSK) lie on the Mitochondrial intermembrane side of the membrane.

The protein belongs to the mitochondrial Rho GTPase family.

It is found in the mitochondrion outer membrane. In terms of biological role, mitochondrial GTPase involved in mitochondrial trafficking. Probably involved in control of anterograde transport of mitochondria and their subcellular distribution. This Saccharomyces cerevisiae (strain ATCC 204508 / S288c) (Baker's yeast) protein is Mitochondrial Rho GTPase 1 (GEM1).